The chain runs to 456 residues: MTAAQLFALSPLAALAIGAVIAMLLAPVTKSAAAARIAAATGLAVAALLEILRAGVPPAPIGALFTDDGLARYGTAYAALFGLAALVFLRVAGVAKEAPALVALVALGAASLTGAGHAATLFLGLELISLSLIALFAFPLTGMALEASYKFLVMSGLATSAQLLGVALIYAETGALDFPGWVGHGPLFALGTALLLAGLAFKFSLAPFHMWTPDAFQGAPAGAAALAGVVSKAAVAIAILRLNSEAQLPQPLWSAGLATLGAASVLVGNVLALRQQLLPRMLGYSTIAHSGYIAMILASGAPGTNEAVLFYLGIYAPALTATLCASAMLGPAPMLEDLRGLARKRPLEATSLSVGLLSLAGLPVAGGFVAKLYLFKALVQSESWILLAIAMVGAALGFYYYIRFFTAPFFGHGGIEPAPRHRFDRLLLIFCFGLIMLFGFEPLVLITAVNSALAVR.

14 consecutive transmembrane segments (helical) span residues 6–26 (LFAL…MLLA), 45–65 (VAAL…GALF), 75–95 (TAYA…AGVA), 97–117 (EAPA…GAGH), 118–138 (AATL…LFAF), 151–171 (FLVM…LIYA), 181–201 (WVGH…GLAF), 220–240 (PAGA…IAIL), 252–272 (LWSA…NVLA), 281–301 (MLGY…ASGA), 308–328 (VLFY…ASAM), 355–375 (GLLS…LYLF), 382–402 (ESWI…YYYI), and 426–446 (LLLI…LVLI).

This sequence belongs to the complex I subunit 2 family. NDH-1 is composed of 14 different subunits. Subunits NuoA, H, J, K, L, M, N constitute the membrane sector of the complex.

It is found in the cell inner membrane. It carries out the reaction a quinone + NADH + 5 H(+)(in) = a quinol + NAD(+) + 4 H(+)(out). Functionally, NDH-1 shuttles electrons from NADH, via FMN and iron-sulfur (Fe-S) centers, to quinones in the respiratory chain. The immediate electron acceptor for the enzyme in this species is believed to be ubiquinone. Couples the redox reaction to proton translocation (for every two electrons transferred, four hydrogen ions are translocated across the cytoplasmic membrane), and thus conserves the redox energy in a proton gradient. This chain is NADH-quinone oxidoreductase subunit N, found in Rhodopseudomonas palustris (strain BisA53).